Reading from the N-terminus, the 384-residue chain is GDSL esterase/lipase At1g28670 (384 aa).

Residues 1 to 24 form the signal peptide; the sequence is MASSLKKLISSFLLVLYSTTIIVA. Serine 42 serves as the catalytic Nucleophile. 3 N-linked (GlcNAc...) asparagine glycosylation sites follow: asparagine 105, asparagine 138, and asparagine 321. Active-site residues include aspartate 346 and histidine 349.

This sequence belongs to the 'GDSL' lipolytic enzyme family.

Its subcellular location is the secreted. The chain is GDSL esterase/lipase At1g28670 from Arabidopsis thaliana (Mouse-ear cress).